Here is a 377-residue protein sequence, read N- to C-terminus: Glutamate 5-kinase (377 aa).

K17 provides a ligand contact to ATP. Substrate-binding residues include S56, D143, and N155. Position 217–223 (217–223 (SGGMFSK)) interacts with ATP. In terms of domain architecture, PUA spans 282–360 (AGDLVIDDGA…CEIESILGKC (79 aa)).

This sequence belongs to the glutamate 5-kinase family.

It is found in the cytoplasm. The enzyme catalyses L-glutamate + ATP = L-glutamyl 5-phosphate + ADP. Its pathway is amino-acid biosynthesis; L-proline biosynthesis; L-glutamate 5-semialdehyde from L-glutamate: step 1/2. In terms of biological role, catalyzes the transfer of a phosphate group to glutamate to form L-glutamate 5-phosphate. This is Glutamate 5-kinase from Maridesulfovibrio salexigens (strain ATCC 14822 / DSM 2638 / NCIMB 8403 / VKM B-1763) (Desulfovibrio salexigens).